We begin with the raw amino-acid sequence, 209 residues long: Thiamine-phosphate synthase (209 aa).

4-amino-2-methyl-5-(diphosphooxymethyl)pyrimidine contacts are provided by residues 36 to 40 (QYRDK) and N68. Residues D69 and D87 each contribute to the Mg(2+) site. T106 contacts 4-amino-2-methyl-5-(diphosphooxymethyl)pyrimidine. Residue 133 to 135 (SST) coordinates 2-[(2R,5Z)-2-carboxy-4-methylthiazol-5(2H)-ylidene]ethyl phosphate. Position 136 (K136) interacts with 4-amino-2-methyl-5-(diphosphooxymethyl)pyrimidine. G163 lines the 2-[(2R,5Z)-2-carboxy-4-methylthiazol-5(2H)-ylidene]ethyl phosphate pocket.

It belongs to the thiamine-phosphate synthase family. Mg(2+) serves as cofactor.

It carries out the reaction 2-[(2R,5Z)-2-carboxy-4-methylthiazol-5(2H)-ylidene]ethyl phosphate + 4-amino-2-methyl-5-(diphosphooxymethyl)pyrimidine + 2 H(+) = thiamine phosphate + CO2 + diphosphate. It catalyses the reaction 2-(2-carboxy-4-methylthiazol-5-yl)ethyl phosphate + 4-amino-2-methyl-5-(diphosphooxymethyl)pyrimidine + 2 H(+) = thiamine phosphate + CO2 + diphosphate. The enzyme catalyses 4-methyl-5-(2-phosphooxyethyl)-thiazole + 4-amino-2-methyl-5-(diphosphooxymethyl)pyrimidine + H(+) = thiamine phosphate + diphosphate. It functions in the pathway cofactor biosynthesis; thiamine diphosphate biosynthesis; thiamine phosphate from 4-amino-2-methyl-5-diphosphomethylpyrimidine and 4-methyl-5-(2-phosphoethyl)-thiazole: step 1/1. Its function is as follows. Condenses 4-methyl-5-(beta-hydroxyethyl)thiazole monophosphate (THZ-P) and 2-methyl-4-amino-5-hydroxymethyl pyrimidine pyrophosphate (HMP-PP) to form thiamine monophosphate (TMP). In Pseudomonas aeruginosa (strain UCBPP-PA14), this protein is Thiamine-phosphate synthase.